We begin with the raw amino-acid sequence, 493 residues long: Glutamyl-tRNA(Gln) amidotransferase subunit A (493 aa).

Residues Lys78 and Ser158 each act as charge relay system in the active site. Ser182 acts as the Acyl-ester intermediate in catalysis.

This sequence belongs to the amidase family. GatA subfamily. As to quaternary structure, heterotrimer of A, B and C subunits.

It catalyses the reaction L-glutamyl-tRNA(Gln) + L-glutamine + ATP + H2O = L-glutaminyl-tRNA(Gln) + L-glutamate + ADP + phosphate + H(+). Functionally, allows the formation of correctly charged Gln-tRNA(Gln) through the transamidation of misacylated Glu-tRNA(Gln) in organisms which lack glutaminyl-tRNA synthetase. The reaction takes place in the presence of glutamine and ATP through an activated gamma-phospho-Glu-tRNA(Gln). The chain is Glutamyl-tRNA(Gln) amidotransferase subunit A from Rickettsia africae (strain ESF-5).